A 136-amino-acid chain; its full sequence is Ribonuclease P protein component (136 aa).

The disordered stretch occupies residues 116–136; it reads RPQRAAAKGSAGTTQKGTPRA. Residues 126 to 136 are compositionally biased toward polar residues; it reads AGTTQKGTPRA.

The protein belongs to the RnpA family. As to quaternary structure, consists of a catalytic RNA component (M1 or rnpB) and a protein subunit.

It catalyses the reaction Endonucleolytic cleavage of RNA, removing 5'-extranucleotides from tRNA precursor.. Its function is as follows. RNaseP catalyzes the removal of the 5'-leader sequence from pre-tRNA to produce the mature 5'-terminus. It can also cleave other RNA substrates such as 4.5S RNA. The protein component plays an auxiliary but essential role in vivo by binding to the 5'-leader sequence and broadening the substrate specificity of the ribozyme. The sequence is that of Ribonuclease P protein component from Pseudarthrobacter chlorophenolicus (strain ATCC 700700 / DSM 12829 / CIP 107037 / JCM 12360 / KCTC 9906 / NCIMB 13794 / A6) (Arthrobacter chlorophenolicus).